A 274-amino-acid chain; its full sequence is METFSLLEIFKAVILGIVQGITEWLPVSSTGHMILVDEFIKLNFSNTFISTFLVVIQFGSILAVLVIFFRKLNPFDSAKNIKQKKETVRLWLKVIIAVIPSGVIGILFEDDIDRLFFNSTVVAIALIVYGIIMIGLEKRNKRPKYKDFSQVTYKLALCIGLFQCLALIPGTSRSGSTIIGAVLLGTSRYVAAEFSFFLAIPTMLGASALKLLKAGFGFTGFEWLILGVGSVVAFVVSIVVIKFFMDYIKKHDFKVFGYYRIVLGIVVLAYFFLL.

Transmembrane regions (helical) follow at residues 7–27 (LEIF…WLPV), 48–68 (FIST…LVIF), 88–108 (VRLW…GILF), 115–135 (LFFN…IMIG), 151–171 (VTYK…IPGT), 189–209 (YVAA…ASAL), 221–241 (FEWL…IVVI), and 253–273 (FKVF…YFFL).

This sequence belongs to the UppP family.

Its subcellular location is the cell membrane. It catalyses the reaction di-trans,octa-cis-undecaprenyl diphosphate + H2O = di-trans,octa-cis-undecaprenyl phosphate + phosphate + H(+). Catalyzes the dephosphorylation of undecaprenyl diphosphate (UPP). Confers resistance to bacitracin. The chain is Undecaprenyl-diphosphatase 1 from Clostridioides difficile (strain 630) (Peptoclostridium difficile).